A 253-amino-acid polypeptide reads, in one-letter code: Probable transcriptional regulatory protein Krad_3057 (253 aa).

The protein belongs to the TACO1 family.

The protein resides in the cytoplasm. This Kineococcus radiotolerans (strain ATCC BAA-149 / DSM 14245 / SRS30216) protein is Probable transcriptional regulatory protein Krad_3057.